The sequence spans 91 residues: Small ribosomal subunit protein uS19 (91 aa).

The protein belongs to the universal ribosomal protein uS19 family.

In terms of biological role, protein S19 forms a complex with S13 that binds strongly to the 16S ribosomal RNA. The sequence is that of Small ribosomal subunit protein uS19 from Lactiplantibacillus plantarum (strain ATCC BAA-793 / NCIMB 8826 / WCFS1) (Lactobacillus plantarum).